An 840-amino-acid chain; its full sequence is Kinesin-like protein KIN-14J (840 aa).

A disordered region spans residues 1–74 (MEADPAPSST…KGEEPVVSAE (74 aa)). In terms of domain architecture, Kinesin motor spans 177 to 501 (NIRVFCRCRP…LNFASRVRAI (325 aa)). 260–267 (GQTGTGKT) contributes to the ATP binding site. Positions 517–594 (KLKQMTEKIR…KKAARDTARS (78 aa)) form a coiled coil. The span at 581–593 (LANEKKAARDTAR) shows a compositional bias: basic and acidic residues. Positions 581 to 617 (LANEKKAARDTARSTKPPLAPMRQRPPLGRIGNHIPP) are disordered.

Belongs to the TRAFAC class myosin-kinesin ATPase superfamily. Kinesin family. KIN-14 subfamily.

This chain is Kinesin-like protein KIN-14J, found in Oryza sativa subsp. japonica (Rice).